A 370-amino-acid chain; its full sequence is 3-dehydroquinate synthase (370 aa).

NAD(+) is bound by residues G107–D111, T131–S132, K144, and K153. E186, H249, and H267 together coordinate Zn(2+).

This sequence belongs to the sugar phosphate cyclases superfamily. Dehydroquinate synthase family. It depends on Co(2+) as a cofactor. Requires Zn(2+) as cofactor. NAD(+) is required as a cofactor.

Its subcellular location is the cytoplasm. The catalysed reaction is 7-phospho-2-dehydro-3-deoxy-D-arabino-heptonate = 3-dehydroquinate + phosphate. It functions in the pathway metabolic intermediate biosynthesis; chorismate biosynthesis; chorismate from D-erythrose 4-phosphate and phosphoenolpyruvate: step 2/7. Catalyzes the conversion of 3-deoxy-D-arabino-heptulosonate 7-phosphate (DAHP) to dehydroquinate (DHQ). In Ruegeria pomeroyi (strain ATCC 700808 / DSM 15171 / DSS-3) (Silicibacter pomeroyi), this protein is 3-dehydroquinate synthase.